A 96-amino-acid polypeptide reads, in one-letter code: Beta-defensin 20 (96 aa).

Residues 1-21 form the signal peptide; it reads MKLPQLLLILLFVVLADSVQP. Cystine bridges form between cysteine 24-cysteine 52, cysteine 32-cysteine 46, and cysteine 36-cysteine 53.

This sequence belongs to the beta-defensin family.

The protein localises to the secreted. In terms of biological role, has antibacterial activity. The polypeptide is Beta-defensin 20 (Defb20) (Rattus norvegicus (Rat)).